Consider the following 269-residue polypeptide: Intercellular adhesion molecule 4 (269 aa).

The N-terminal stretch at 1-20 is a signal peptide; the sequence is SLFPLSLLFFLAAAYPGVGS. Residues 21-238 lie on the Extracellular side of the membrane; it reads ALGRRTKRAQ…MLAWSSAPTA (218 aa). Ig-like C2-type domains follow at residues 60–122 and 144–215; these read GKSV…TRWA and GRKY…LNLD. N-linked (GlcNAc...) asparagine glycosylation is found at N66, N76, N188, and N221. 4 cysteine pairs are disulfide-bonded: C67-C111, C67-C115, C71-C115, and C151-C208. The helical transmembrane segment at 239–259 threads the bilayer; that stretch reads LASVSIAALVGILLTVGAAYL. Over 260–269 the chain is Cytoplasmic; it reads CKCLAMKSQA.

It belongs to the immunoglobulin superfamily. ICAM family. In terms of processing, N- and O-glycosylated.

The protein resides in the cell membrane. Functionally, ICAM proteins are ligands for the leukocyte adhesion protein LFA-1 (integrin alpha-L/beta-2). ICAM4 is also a ligand for alpha-4/beta-1 and alpha-V integrins. This chain is Intercellular adhesion molecule 4 (ICAM4), found in Pan troglodytes (Chimpanzee).